Consider the following 176-residue polypeptide: Pituitary adenylate cyclase-activating polypeptide (176 aa).

The N-terminal stretch at 1–24 is a signal peptide; sequence MTMCSGARLALLVYGILMHSSVYG. Residues 25 to 80 constitute a propeptide that is removed on maturation; sequence SPAASGLRFPGIRPENEVYDEDGNPQQDFYDSESLGVGSPASALRDAYALYYPAEE. Residues 98-135 are disordered; that stretch reads QPSARRSPADAHGQGLGWDPGGSADDDSEPLSKRHSDG. Positions 150-158 are important for receptor binding; sequence VKKYLAAVL. The residue at position 158 (Leu158) is a Leucine amide. The residue at position 169 (Lys169) is a Lysine amide. A propeptide spanning residues 173–176 is cleaved from the precursor; sequence IPYL.

Belongs to the glucagon family. As to quaternary structure, interacts with ADCYAP1R1 (via N-terminal extracellular domain); both PACAP27 and PACAP38 neuropeptides function as ligand for the ADCYAP1R1 receptor, which modulates the activity of downstream effectors. Interacts with VIPR1 and VIPR2; functions as ligand for VIPR1 and VIPR2 receptors, which modulate the activity of downstream effectors.

It is found in the secreted. Functionally, PACAP is a neuropeptide involved in diverse array of physiological processes through activating the PACAP subfamily of class B1 G protein-coupled receptors: VIP receptor 1 (VIPR1), VIP receptor 2 (VIPR2), and PACAP type I receptor (ADCYAP1R1). Exerts neuroprotective and general cytoprotective effects due to anti-apoptotic, anti-inflammatory, and antioxidant actions. Promotes neuron projection development through the RAPGEF2/Rap1/B-Raf/ERK pathway. In chromaffin cells, induces long-lasting increase of intracellular calcium concentrations and neuroendocrine secretion. Involved in the control of glucose homeostasis, induces insulin secretion by pancreatic beta cells. PACAP exists in two bioactive forms from proteolysis of the same precursor protein, PACAP27 and PACAP38, which differ by eleven amino acid residues in the C-terminus. This is Pituitary adenylate cyclase-activating polypeptide (ADCYAP1) from Bos taurus (Bovine).